Reading from the N-terminus, the 430-residue chain is V-type ATP synthase beta chain 1 (430 aa).

It belongs to the ATPase alpha/beta chains family.

Produces ATP from ADP in the presence of a proton gradient across the membrane. The V-type beta chain is a regulatory subunit. This is V-type ATP synthase beta chain 1 (atpB1) from Treponema pallidum (strain Nichols).